The chain runs to 388 residues: MNDFHRDTWAEVDLDAIYDNVENLRRLLPDDTHIMAVVKANAYGHGDVQVARTALEAGASRLAVAFLDEALALREKGIEAPILVLGASRPADAALAAQQRIALTVFRSDWLEEASALYSGPFPIHFHLKMDTGMGRLGVKDEEETKRIVALIERHPHFVLEGLYTHFATADEVNTDYFSYQYTRFLHMLEWLPSRPPLVHCANSAASLRFPDRTFNMVRFGIAMYGLAPSPGIKPLLPYPLKEAFSLHSRLVHVKKLQPGEKVSYGATYTAQTEEWIGTIPIGYADGWLRRLQHFHVLVDGQKAPIVGRICMDQCMIRLPGPLPVGTKVTLIGRQGDEVISIDDVARHLETINYEVPCTISYRVPRIFFRHKRIMEVRNAIGRGESSA.

The active-site Proton acceptor; specific for D-alanine is the K39. K39 carries the N6-(pyridoxal phosphate)lysine modification. K129 bears the N6-carboxylysine mark. Position 136 (R136) interacts with substrate. Catalysis depends on Y265, which acts as the Proton acceptor; specific for L-alanine. M312 is a binding site for substrate.

The protein belongs to the alanine racemase family. In terms of assembly, homodimer. The cofactor is pyridoxal 5'-phosphate.

The enzyme catalyses L-alanine = D-alanine. Its pathway is amino-acid biosynthesis; D-alanine biosynthesis; D-alanine from L-alanine: step 1/1. Inhibited by acetate and propionate. Irreversibly inhibited by cycloserine. Functionally, catalyzes the interconversion of L-alanine and D-alanine. Also weakly active on serine. The sequence is that of Alanine racemase (alr) from Geobacillus stearothermophilus (Bacillus stearothermophilus).